The following is a 341-amino-acid chain: ATPase GET3 (341 aa).

Residue 34 to 41 coordinates ATP; it reads KGGVGKTT. Residue aspartate 63 is part of the active site. Positions 245 and 272 each coordinate ATP. Zn(2+)-binding residues include cysteine 283 and cysteine 286.

Belongs to the arsA ATPase family. As to quaternary structure, homodimer.

Its subcellular location is the cytoplasm. It localises to the endoplasmic reticulum. Functionally, ATPase required for the post-translational delivery of tail-anchored (TA) proteins to the endoplasmic reticulum. Recognizes and selectively binds the transmembrane domain of TA proteins in the cytosol. This complex then targets to the endoplasmic reticulum by membrane-bound receptors, where the tail-anchored protein is released for insertion. This process is regulated by ATP binding and hydrolysis. ATP binding drives the homodimer towards the closed dimer state, facilitating recognition of newly synthesized TA membrane proteins. ATP hydrolysis is required for insertion. Subsequently, the homodimer reverts towards the open dimer state, lowering its affinity for the membrane-bound receptor, and returning it to the cytosol to initiate a new round of targeting. The protein is ATPase GET3 of Ajellomyces dermatitidis (strain ER-3 / ATCC MYA-2586) (Blastomyces dermatitidis).